The chain runs to 402 residues: Glutamyl-tRNA reductase (402 aa).

Substrate-binding positions include 48–51 (TCNR), Ser91, 96–98 (EDQ), and Gln102. Cys49 (nucleophile) is an active-site residue. 171–176 (GAGKMG) is a binding site for NADP(+).

Belongs to the glutamyl-tRNA reductase family. As to quaternary structure, homodimer.

The enzyme catalyses (S)-4-amino-5-oxopentanoate + tRNA(Glu) + NADP(+) = L-glutamyl-tRNA(Glu) + NADPH + H(+). Its pathway is porphyrin-containing compound metabolism; protoporphyrin-IX biosynthesis; 5-aminolevulinate from L-glutamyl-tRNA(Glu): step 1/2. Catalyzes the NADPH-dependent reduction of glutamyl-tRNA(Glu) to glutamate 1-semialdehyde (GSA). This chain is Glutamyl-tRNA reductase, found in Methanothermobacter thermautotrophicus (strain ATCC 29096 / DSM 1053 / JCM 10044 / NBRC 100330 / Delta H) (Methanobacterium thermoautotrophicum).